The following is a 317-amino-acid chain: Pyridoxal 5'-phosphate synthase subunit PdxS (317 aa).

Asp-47 contributes to the D-ribose 5-phosphate binding site. Lys-104 acts as the Schiff-base intermediate with D-ribose 5-phosphate in catalysis. Gly-176 provides a ligand contact to D-ribose 5-phosphate. A D-glyceraldehyde 3-phosphate-binding site is contributed by Arg-188. D-ribose 5-phosphate is bound by residues Gly-237 and 258–259 (GS).

This sequence belongs to the PdxS/SNZ family. In terms of assembly, in the presence of PdxT, forms a dodecamer of heterodimers.

The catalysed reaction is aldehydo-D-ribose 5-phosphate + D-glyceraldehyde 3-phosphate + L-glutamine = pyridoxal 5'-phosphate + L-glutamate + phosphate + 3 H2O + H(+). The protein operates within cofactor biosynthesis; pyridoxal 5'-phosphate biosynthesis. Catalyzes the formation of pyridoxal 5'-phosphate from ribose 5-phosphate (RBP), glyceraldehyde 3-phosphate (G3P) and ammonia. The ammonia is provided by the PdxT subunit. Can also use ribulose 5-phosphate and dihydroxyacetone phosphate as substrates, resulting from enzyme-catalyzed isomerization of RBP and G3P, respectively. The polypeptide is Pyridoxal 5'-phosphate synthase subunit PdxS (Corynebacterium glutamicum (strain ATCC 13032 / DSM 20300 / JCM 1318 / BCRC 11384 / CCUG 27702 / LMG 3730 / NBRC 12168 / NCIMB 10025 / NRRL B-2784 / 534)).